Consider the following 428-residue polypeptide: MNVDFGNALAAEAVTGVSEASLERLDDRVADAHDRIEANIEARRFGYASLALPTDTDPDAIYEAVSGFDPEAVLTVGIGGSALGAETITAALGAESHYTLDNVDPAPTRQLLDELPLSSTLVNVVSRSGTTAETLANFLVVREAMADAGVDWTDRTVVTTGAEGPLRTLADAHDLPSCTVPEGVPGRFSALSAVGLLPAAALGCDIEAVLAGGAAGRESLAPSLFESPAYAYGAVAYATEQRGATTNAIVPYAEQLEPFAEWFAQLWAESLGKDGLGQTPARALGATDQHSQLQLYRAGRKDKLVTLVRPRERAGVDIPETDIDALSYLGGESLESLLDAEFEATEASLAAAGQPNVRIELDSLDAHGVGELLYGMEAACILYGELLGIETFTQPAVEWGKRAARGLLGGGDFEEAEAVADKTVRRVE.

The Proton donor role is filled by Glu269. Active-site residues include His290 and Lys401.

Belongs to the GPI family.

It localises to the cytoplasm. It catalyses the reaction alpha-D-glucose 6-phosphate = beta-D-fructose 6-phosphate. It participates in carbohydrate biosynthesis; gluconeogenesis. It functions in the pathway carbohydrate degradation; glycolysis; D-glyceraldehyde 3-phosphate and glycerone phosphate from D-glucose: step 2/4. Functionally, catalyzes the reversible isomerization of glucose-6-phosphate to fructose-6-phosphate. In Natronomonas pharaonis (strain ATCC 35678 / DSM 2160 / CIP 103997 / JCM 8858 / NBRC 14720 / NCIMB 2260 / Gabara) (Halobacterium pharaonis), this protein is Probable glucose-6-phosphate isomerase.